Here is a 261-residue protein sequence, read N- to C-terminus: Taurine import ATP-binding protein TauB (261 aa).

One can recognise an ABC transporter domain in the interval 4 to 233; the sequence is LQLERIGAQY…RYAAGESARA (230 aa). Residue 38-45 participates in ATP binding; that stretch reads GPSGSGKT.

It belongs to the ABC transporter superfamily. Taurine importer (TC 3.A.1.17.1) family. In terms of assembly, the complex is composed of two ATP-binding proteins (TauB), two transmembrane proteins (TauC) and a solute-binding protein (TauA).

Its subcellular location is the cell inner membrane. It catalyses the reaction taurine(out) + ATP + H2O = taurine(in) + ADP + phosphate + H(+). Its function is as follows. Part of the ABC transporter complex TauABC involved in taurine import. Responsible for energy coupling to the transport system. This is Taurine import ATP-binding protein TauB from Pseudomonas savastanoi pv. phaseolicola (strain 1448A / Race 6) (Pseudomonas syringae pv. phaseolicola (strain 1448A / Race 6)).